The chain runs to 59 residues: UPF0434 protein Sputw3181_2540 (59 aa).

The protein belongs to the UPF0434 family.

The sequence is that of UPF0434 protein Sputw3181_2540 from Shewanella sp. (strain W3-18-1).